Reading from the N-terminus, the 344-residue chain is Cyclin-dependent kinase 20 (344 aa).

The region spanning 4–288 is the Protein kinase domain; sequence YSILGRIGEG…ARQALLHPYF (285 aa). Residues 10-18 and Lys-33 contribute to the ATP site; that span reads IGEGAHGIV. The active-site Proton acceptor is the Asp-127.

Belongs to the protein kinase superfamily. CMGC Ser/Thr protein kinase family. CDC2/CDKX subfamily. Monomer. Interacts with tbc1d32.

The protein localises to the nucleus. Its subcellular location is the cytoplasm. It is found in the cell projection. The protein resides in the cilium. The enzyme catalyses L-seryl-[protein] + ATP = O-phospho-L-seryl-[protein] + ADP + H(+). It carries out the reaction L-threonyl-[protein] + ATP = O-phospho-L-threonyl-[protein] + ADP + H(+). Its function is as follows. Involved in cell growth. Activates cdk2, a kinase involved in the control of the cell cycle, by phosphorylating residue 'Thr-160'. Required for high-level Shh responses in the developing neural tube. Together with tbc1d32, controls the structure of the primary cilium by coordinating assembly of the ciliary membrane and axoneme, allowing gli2 to be properly activated in response to SHH signaling. The polypeptide is Cyclin-dependent kinase 20 (cdk20) (Danio rerio (Zebrafish)).